Consider the following 358-residue polypeptide: Fructose-bisphosphate aldolase 5, cytosolic (358 aa).

Serine 2 carries the N-acetylserine modification. Residue arginine 39 participates in substrate binding. At cysteine 68 the chain carries S-glutathionyl cysteine; transient. Cysteine 173 is subject to S-glutathionyl cysteine; transient; alternate. Cysteine 173 carries the post-translational modification S-nitrosocysteine; transient; alternate. The active-site Proton acceptor is the glutamate 183. The active-site Schiff-base intermediate with dihydroxyacetone-P is lysine 225. Substrate-binding positions include 266 to 268 (SGG) and arginine 298. Position 350 is a phosphoserine (serine 350).

Belongs to the class I fructose-bisphosphate aldolase family. Homotetramer. Interacts with TRX3. S-glutathionylated at Cys-68 and Cys-173. In terms of processing, S-nitrosylated at Cys-173. As to expression, expressed in rosette leaves and cauline leaves.

It localises to the cytoplasm. Its subcellular location is the cytosol. It carries out the reaction beta-D-fructose 1,6-bisphosphate = D-glyceraldehyde 3-phosphate + dihydroxyacetone phosphate. Its pathway is carbohydrate degradation; glycolysis; D-glyceraldehyde 3-phosphate and glycerone phosphate from D-glucose: step 4/4. Fructose-bisphosphate aldolase that plays a key role in glycolysis and gluconeogenesis. The sequence is that of Fructose-bisphosphate aldolase 5, cytosolic from Arabidopsis thaliana (Mouse-ear cress).